Reading from the N-terminus, the 311-residue chain is Methionyl-tRNA formyltransferase (311 aa).

Residue 110–113 (SLLP) participates in (6S)-5,6,7,8-tetrahydrofolate binding.

This sequence belongs to the Fmt family.

It carries out the reaction L-methionyl-tRNA(fMet) + (6R)-10-formyltetrahydrofolate = N-formyl-L-methionyl-tRNA(fMet) + (6S)-5,6,7,8-tetrahydrofolate + H(+). In terms of biological role, attaches a formyl group to the free amino group of methionyl-tRNA(fMet). The formyl group appears to play a dual role in the initiator identity of N-formylmethionyl-tRNA by promoting its recognition by IF2 and preventing the misappropriation of this tRNA by the elongation apparatus. This Streptococcus pyogenes serotype M1 protein is Methionyl-tRNA formyltransferase.